A 736-amino-acid polypeptide reads, in one-letter code: Protein DSF2 (736 aa).

Over residues 1 to 10 (MNQNLKNTSW) the composition is skewed to polar residues. 4 disordered regions span residues 1–46 (MNQN…DSQF), 178–208 (SGMKPQMNRNEKDYKYPNLENGNRSTNSPNP), 229–410 (ISDN…SGEN), and 440–461 (FKTASTPQSSTDKKKNSKARPN). Over residues 14–24 (IGSDDQERKAN) the composition is skewed to basic and acidic residues. Composition is skewed to polar residues over residues 25-46 (SSEVSQSPPPNNSFESSMDSQF) and 197-208 (ENGNRSTNSPNP). The segment covering 238 to 256 (NNANSKNNRTTSNNINTST) has biased composition (low complexity). Polar residues predominate over residues 264 to 284 (KQSCPNEFTTTQKSNCLYRNG). Low complexity-rich tracts occupy residues 285–294 (SSTSTNTSFS), 303–318 (KTQSSFESESSSFSKL), and 335–350 (SNSSTSTITKTNTMTN). Positions 374–385 (KLFKSPRTRAKN) are enriched in basic residues. Over residues 392 to 410 (EGSSPIRSATNSLDFSGEN) the composition is skewed to polar residues.

This chain is Protein DSF2 (DSF2), found in Saccharomyces cerevisiae (strain ATCC 204508 / S288c) (Baker's yeast).